We begin with the raw amino-acid sequence, 303 residues long: Dihydroorotate dehydrogenase B (NAD(+)), catalytic subunit (303 aa).

Residues serine 21 and 45-46 (KG) each bind FMN. Residues lysine 45 and 69–73 (NAVGL) each bind substrate. FMN contacts are provided by asparagine 99 and asparagine 127. Residue asparagine 127 participates in substrate binding. Cysteine 130 acts as the Nucleophile in catalysis. 2 residues coordinate FMN: lysine 165 and isoleucine 191. 192–193 (NT) lines the substrate pocket. FMN-binding positions include glycine 217, 243-244 (GG), and 265-266 (GT).

The protein belongs to the dihydroorotate dehydrogenase family. Type 1 subfamily. As to quaternary structure, heterotetramer of 2 PyrK and 2 PyrD type B subunits. The cofactor is FMN.

The protein localises to the cytoplasm. It catalyses the reaction (S)-dihydroorotate + NAD(+) = orotate + NADH + H(+). The protein operates within pyrimidine metabolism; UMP biosynthesis via de novo pathway; orotate from (S)-dihydroorotate (NAD(+) route): step 1/1. In terms of biological role, catalyzes the conversion of dihydroorotate to orotate with NAD(+) as electron acceptor. This chain is Dihydroorotate dehydrogenase B (NAD(+)), catalytic subunit (pyrD), found in Bacteroides thetaiotaomicron (strain ATCC 29148 / DSM 2079 / JCM 5827 / CCUG 10774 / NCTC 10582 / VPI-5482 / E50).